A 192-amino-acid polypeptide reads, in one-letter code: 7-methyl-GTP pyrophosphatase (192 aa).

Aspartate 69 (proton acceptor) is an active-site residue.

The protein belongs to the Maf family. YceF subfamily. A divalent metal cation is required as a cofactor.

It localises to the cytoplasm. It catalyses the reaction N(7)-methyl-GTP + H2O = N(7)-methyl-GMP + diphosphate + H(+). Nucleoside triphosphate pyrophosphatase that hydrolyzes 7-methyl-GTP (m(7)GTP). May have a dual role in cell division arrest and in preventing the incorporation of modified nucleotides into cellular nucleic acids. This Pseudomonas fluorescens (strain Pf0-1) protein is 7-methyl-GTP pyrophosphatase.